The sequence spans 417 residues: Serine hydroxymethyltransferase (417 aa).

(6S)-5,6,7,8-tetrahydrofolate is bound by residues Leu-121 and 125 to 127 (GHL). Residue Lys-229 is modified to N6-(pyridoxal phosphate)lysine. 355–357 (SPF) is a binding site for (6S)-5,6,7,8-tetrahydrofolate.

The protein belongs to the SHMT family. In terms of assembly, homodimer. Pyridoxal 5'-phosphate serves as cofactor.

It localises to the cytoplasm. It catalyses the reaction (6R)-5,10-methylene-5,6,7,8-tetrahydrofolate + glycine + H2O = (6S)-5,6,7,8-tetrahydrofolate + L-serine. It participates in one-carbon metabolism; tetrahydrofolate interconversion. The protein operates within amino-acid biosynthesis; glycine biosynthesis; glycine from L-serine: step 1/1. Functionally, catalyzes the reversible interconversion of serine and glycine with tetrahydrofolate (THF) serving as the one-carbon carrier. This reaction serves as the major source of one-carbon groups required for the biosynthesis of purines, thymidylate, methionine, and other important biomolecules. Also exhibits THF-independent aldolase activity toward beta-hydroxyamino acids, producing glycine and aldehydes, via a retro-aldol mechanism. This is Serine hydroxymethyltransferase from Xanthomonas axonopodis pv. citri (strain 306).